Consider the following 1004-residue polypeptide: Ovochymase-2 (1004 aa).

The N-terminal stretch at 1–19 (MPTRNLLLGSILLSLAVKG) is a signal peptide. Residues 20-45 (DPGPHRGARCGVSPLGSATELNYLSR) constitute a propeptide, activation peptide. The region spanning 46 to 295 (IVGGRESKKG…LLGWVSSQLN (250 aa)) is the Peptidase S1 1 domain. A disulfide bond links C71 and C87. H86 serves as the catalytic Charge relay system. Position 113 (E113) interacts with Ca(2+). N128 is a glycosylation site (N-linked (GlcNAc...) asparagine). D136 functions as the Charge relay system in the catalytic mechanism. Intrachain disulfides connect C170/C240, C201/C219, and C230/C259. The active-site Charge relay system is S234. 2 consecutive CUB domains span residues 309–419 (QDGV…YSAV) and 429–541 (CGSF…FTFV). N-linked (GlcNAc...) asparagine glycosylation occurs at N351. C363 and C382 are joined by a disulfide. N408 is a glycosylation site (N-linked (GlcNAc...) asparagine). Cystine bridges form between C429–C456 and C483–C504. Residues 547–558 (VEDSRQGNMPST) are compositionally biased toward polar residues. The interval 547-566 (VEDSRQGNMPSTNKKETTAQ) is disordered. The Peptidase S1 2 domain maps to 580 to 820 (IYNSIAKVEE…FIDWIRQIMS (241 aa)). The propeptide at 584-1004 (IAKVEEAVPH…VVPDSDSSEP (421 aa)) is activation peptide. 4 disulfides stabilise this stretch: C609-C625, C706-C776, C737-C754, and C766-C796. N-linked (GlcNAc...) asparagine glycosylation occurs at N763. The N-linked (GlcNAc...) asparagine glycan is linked to N940.

This sequence belongs to the peptidase S1 family. Post-translationally, the catalytically inactive 110 kDa form is processed both N- and C-terminally to give rise to the 66 kDa catalytically active form. As to expression, specifically expressed in the pars recta oviduct.

The protein resides in the secreted. It carries out the reaction Preferential cleavage at 371-Gly-Ser-Arg-|-Trp-374 of glycoprotein gp43 in Xenopus laevis coelemic egg envelope to yield gp41.. Converts the glycoprotein envelope surrounding the egg from an unfertilizable to a fertilizable form during its transit through the pars recta portion of the oviduct by selectively hydrolyzing the envelope glycoprotein gp43. The egg envelope is converted to a sperm-penetrable form, via an increase in sperm binding. The protein is Ovochymase-2 (ovch2) of Xenopus laevis (African clawed frog).